We begin with the raw amino-acid sequence, 486 residues long: UDP-N-acetylmuramoyl-L-alanyl-D-glutamate--2,6-diaminopimelate ligase (486 aa).

UDP-N-acetyl-alpha-D-muramoyl-L-alanyl-D-glutamate is bound at residue S30. An ATP-binding site is contributed by 112–118 (GTNGKTT). Residues 154–155 (TT), S181, Q187, and R189 contribute to the UDP-N-acetyl-alpha-D-muramoyl-L-alanyl-D-glutamate site. K221 is modified (N6-carboxylysine). Residues R378, 402-405 (DNPR), G455, and E459 each bind meso-2,6-diaminopimelate. The Meso-diaminopimelate recognition motif signature appears at 402-405 (DNPR).

Belongs to the MurCDEF family. MurE subfamily. Mg(2+) serves as cofactor. In terms of processing, carboxylation is probably crucial for Mg(2+) binding and, consequently, for the gamma-phosphate positioning of ATP.

Its subcellular location is the cytoplasm. It catalyses the reaction UDP-N-acetyl-alpha-D-muramoyl-L-alanyl-D-glutamate + meso-2,6-diaminopimelate + ATP = UDP-N-acetyl-alpha-D-muramoyl-L-alanyl-gamma-D-glutamyl-meso-2,6-diaminopimelate + ADP + phosphate + H(+). It participates in cell wall biogenesis; peptidoglycan biosynthesis. In terms of biological role, catalyzes the addition of meso-diaminopimelic acid to the nucleotide precursor UDP-N-acetylmuramoyl-L-alanyl-D-glutamate (UMAG) in the biosynthesis of bacterial cell-wall peptidoglycan. The polypeptide is UDP-N-acetylmuramoyl-L-alanyl-D-glutamate--2,6-diaminopimelate ligase (Cytophaga hutchinsonii (strain ATCC 33406 / DSM 1761 / CIP 103989 / NBRC 15051 / NCIMB 9469 / D465)).